The primary structure comprises 547 residues: Glucose-6-phosphate isomerase (547 aa).

The active-site Proton donor is Glu-353. Catalysis depends on residues His-384 and Lys-512.

The protein belongs to the GPI family.

It is found in the cytoplasm. It carries out the reaction alpha-D-glucose 6-phosphate = beta-D-fructose 6-phosphate. The protein operates within carbohydrate biosynthesis; gluconeogenesis. It functions in the pathway carbohydrate degradation; glycolysis; D-glyceraldehyde 3-phosphate and glycerone phosphate from D-glucose: step 2/4. Catalyzes the reversible isomerization of glucose-6-phosphate to fructose-6-phosphate. This is Glucose-6-phosphate isomerase from Pseudoalteromonas atlantica (strain T6c / ATCC BAA-1087).